The following is a 434-amino-acid chain: Gamma-enolase (434 aa).

The residue at position 2 (Ser2) is an N-acetylserine. Lys5 is subject to N6-acetyllysine. Thr26 is subject to Phosphothreonine. A Mg(2+)-binding site is contributed by Ser40. Position 44 is a phosphotyrosine (Tyr44). An N6-acetyllysine; alternate modification is found at Lys60. Position 60 is an N6-succinyllysine; alternate (Lys60). At Lys64 the chain carries N6-acetyllysine. N6-acetyllysine; alternate is present on Lys89. An N6-succinyllysine; alternate modification is found at Lys89. Positions 158 and 167 each coordinate substrate. Lys193, Lys197, and Lys199 each carry N6-acetyllysine. An N6-acetyllysine; alternate modification is found at Lys202. Lys202 is covalently cross-linked (Glycyl lysine isopeptide (Lys-Gly) (interchain with G-Cter in SUMO2); alternate). Glu210 acts as the Proton donor in catalysis. 2 positions are modified to N6-acetyllysine; alternate: Lys228 and Lys233. Residue Lys228 is modified to N6-succinyllysine; alternate. Lys233 is subject to N6-(2-hydroxyisobutyryl)lysine; alternate. Residue Asp245 coordinates Mg(2+). Lys256 carries the post-translational modification N6-acetyllysine. At Ser263 the chain carries Phosphoserine. Position 287 is a phosphotyrosine (Tyr287). The residue at position 291 (Ser291) is a Phosphoserine. The Mg(2+) site is built by Glu293 and Asp318. Substrate contacts are provided by Glu293 and Asp318. Residues Lys335 and Lys343 each carry the N6-acetyllysine modification. Residue Lys343 is the Proton acceptor of the active site. Residues 370-373 (SHRS) and Lys394 each bind substrate. An N6-acetyllysine modification is found at Lys406.

It belongs to the enolase family. Mammalian enolase is composed of 3 isozyme subunits, alpha, beta and gamma, which can form homodimers or heterodimers which are cell-type and development-specific. It depends on Mg(2+) as a cofactor. As to expression, skeletal muscle (at protein level). The alpha/alpha homodimer is expressed in embryo and in most adult tissues. The alpha/beta heterodimer and the beta/beta homodimer are found in striated muscle, and the alpha/gamma heterodimer and the gamma/gamma homodimer in neurons.

The protein resides in the cytoplasm. It localises to the cell membrane. The catalysed reaction is (2R)-2-phosphoglycerate = phosphoenolpyruvate + H2O. It participates in carbohydrate degradation; glycolysis; pyruvate from D-glyceraldehyde 3-phosphate: step 4/5. Has neurotrophic and neuroprotective properties on a broad spectrum of central nervous system (CNS) neurons. Binds, in a calcium-dependent manner, to cultured neocortical neurons and promotes cell survival. This chain is Gamma-enolase (Eno2), found in Mus musculus (Mouse).